We begin with the raw amino-acid sequence, 142 residues long: Large ribosomal subunit protein uL13 (142 aa).

Belongs to the universal ribosomal protein uL13 family. In terms of assembly, part of the 50S ribosomal subunit.

Functionally, this protein is one of the early assembly proteins of the 50S ribosomal subunit, although it is not seen to bind rRNA by itself. It is important during the early stages of 50S assembly. This Alkalilimnicola ehrlichii (strain ATCC BAA-1101 / DSM 17681 / MLHE-1) protein is Large ribosomal subunit protein uL13.